A 344-amino-acid polypeptide reads, in one-letter code: MIELRNLSQRFPGPGGWVEALRNINLTIPQGEVFGIIGRSGAGKSTLVRTINLLTRPTEGNVVVGGRDLTMLPAGALREARREIGMIFQHFNLLSSRTVFDNVALPLELAGASRAEIDAAVLPLLDLVGLSAQKDRYPSQISGGQKQRVGIARALASQPKVLLSDEATSALDPETTRSILDLLKRINRELGLTIVLITHQMEVIKQVCDRVAVLDAGRVVEEGRVIDVFLQPHHEVTRALIGDVIAQELPPALKARVAERLKTGRGHLLRLAFTGSGVDQPILSETIRRYELDFNILHGQIDEIQGQAFGSLAVLAGGEPGKVGQALAFLREQGVVVEELSYVE.

Positions 2–241 (IELRNLSQRF…PHHEVTRALI (240 aa)) constitute an ABC transporter domain. An ATP-binding site is contributed by 38–45 (GRSGAGKS).

The protein belongs to the ABC transporter superfamily. Methionine importer (TC 3.A.1.24) family. The complex is composed of two ATP-binding proteins (MetN), two transmembrane proteins (MetI) and a solute-binding protein (MetQ).

The protein localises to the cell inner membrane. The catalysed reaction is L-methionine(out) + ATP + H2O = L-methionine(in) + ADP + phosphate + H(+). It catalyses the reaction D-methionine(out) + ATP + H2O = D-methionine(in) + ADP + phosphate + H(+). In terms of biological role, part of the ABC transporter complex MetNIQ involved in methionine import. Responsible for energy coupling to the transport system. This is Methionine import ATP-binding protein MetN 1 from Burkholderia lata (strain ATCC 17760 / DSM 23089 / LMG 22485 / NCIMB 9086 / R18194 / 383).